Consider the following 451-residue polypeptide: MSVLLFGVSHRSAPVSVLEQLSTNEAEQAKIIDQVLQSSLVTEAMVLSTCNRVEVYAVVEAFHGGLSVIGQVLAERSGMSLNDLTKYAYVRYAEAAVEHLFAVTSGLDSAVIGEQQVLGQVRRAYATAEANRTVGRTLHELAQRALSVGKRVHSETGIDAAGASVVSVALGMAETKLSGGLGGRTAAVVGAGAMGALAGAHLVRAGIERVHVVNRSLPRAERLAKNLTEQGVVADAVGLDDIARALVDADVVLSSTGAVRPVVSLADVHYALAQRTLAGAEHQMVVCDLGMPRDVDPAVSGLPGVWVVDMDRIQREPSARAAAVDAEAARNIVAAEVANYLAGQRMAEVTPTVTALRQRAADVVEAELLRLDNRLPGLDAAHRDEVAKTVRRVVDKLLHAPTVRVKQLASAPGGDSYAEALRELFELDPQAVEAVAASELPLITTDLDKTE.

Substrate-binding positions include 49 to 52 (TCNR), Ser-109, 114 to 116 (EQQ), and Gln-120. Cys-50 serves as the catalytic Nucleophile. Residue 190-195 (GAGAMG) coordinates NADP(+).

Belongs to the glutamyl-tRNA reductase family. In terms of assembly, homodimer.

The enzyme catalyses (S)-4-amino-5-oxopentanoate + tRNA(Glu) + NADP(+) = L-glutamyl-tRNA(Glu) + NADPH + H(+). It functions in the pathway porphyrin-containing compound metabolism; protoporphyrin-IX biosynthesis; 5-aminolevulinate from L-glutamyl-tRNA(Glu): step 1/2. Its function is as follows. Catalyzes the NADPH-dependent reduction of glutamyl-tRNA(Glu) to glutamate 1-semialdehyde (GSA). This chain is Glutamyl-tRNA reductase, found in Mycolicibacterium smegmatis (strain ATCC 700084 / mc(2)155) (Mycobacterium smegmatis).